A 342-amino-acid polypeptide reads, in one-letter code: ATPase asna-1 (342 aa).

26-33 (KGGVGKTT) contacts ATP. D55 is an active-site residue. Residues E243 and N270 each contribute to the ATP site. 2 residues coordinate Zn(2+): C285 and C288.

The protein belongs to the arsA ATPase family. In terms of assembly, homodimer.

Its subcellular location is the cytoplasm. It localises to the endoplasmic reticulum. Functionally, ATPase required for the post-translational delivery of tail-anchored (TA) proteins to the endoplasmic reticulum. Recognizes and selectively binds the transmembrane domain of TA proteins in the cytosol. This complex then targets to the endoplasmic reticulum by membrane-bound receptors, where the tail-anchored protein is released for insertion. This process is regulated by ATP binding and hydrolysis. ATP binding drives the homodimer towards the closed dimer state, facilitating recognition of newly synthesized TA membrane proteins. ATP hydrolysis is required for insertion. Subsequently, the homodimer reverts towards the open dimer state, lowering its affinity for the membrane-bound receptor, and returning it to the cytosol to initiate a new round of targeting. May be involved in insulin signaling. This Caenorhabditis elegans protein is ATPase asna-1.